We begin with the raw amino-acid sequence, 509 residues long: Solute carrier family 2, facilitated glucose transporter member 4 (509 aa).

The Cytoplasmic portion of the chain corresponds to 1 to 24; sequence MPSGFQQIGSEDGEPPRQRVTGTL. An interaction with SRFBP1 region spans residues 7–13; that stretch reads QIGSEDG. S10 is modified (phosphoserine). A helical membrane pass occupies residues 25–45; sequence VLAVFSAVLGSLQFGYNIGVI. The Extracellular segment spans residues 46–81; the sequence is NAPQKVIEQSYNETWLGRQGPEGPGSIPPGTLTTLW. The N-linked (GlcNAc...) asparagine glycan is linked to N57. The helical transmembrane segment at 82–102 threads the bilayer; sequence ALSVAIFSVGGMISSFLIGII. The Cytoplasmic segment spans residues 103–111; the sequence is SQWLGRKRA. A helical transmembrane segment spans residues 112–132; that stretch reads MLFNNALAVLGGTLMGLAKAA. The Extracellular segment spans residues 133–142; the sequence is ASYEMLILGR. Residues 143 to 163 form a helical membrane-spanning segment; it reads FFIGAYSGLTSGLVPMYVGEI. Residues 164–171 are Cytoplasmic-facing; the sequence is APTHLRGA. A helical membrane pass occupies residues 172 to 192; the sequence is LGTLNQLAIVTGILIAQVLGL. Residue Q177 participates in D-glucose binding. Topologically, residues 193–200 are extracellular; that stretch reads ESMLGTAT. The helical transmembrane segment at 201 to 221 threads the bilayer; it reads LWPLLLGITVLPALLQMVLLP. Topologically, residues 222-287 are cytoplasmic; that stretch reads LCPESPRYLY…LLGSHTHRQP (66 aa). C223 is lipidated: S-palmitoyl cysteine. S274 bears the Phosphoserine; by SGK1 mark. The chain crosses the membrane as a helical span at residues 288–308; it reads LVIAIVLQLSQQLSGINAVFY. D-glucose contacts are provided by residues 298–299 and N304; that span reads QQ. Residues 309-323 are Extracellular-facing; the sequence is YSTSIFESAGVEKPA. The helical transmembrane segment at 324-344 threads the bilayer; the sequence is YATIGAGVVNTVFTLVSVFLV. A D-glucose-binding site is contributed by N333. At 345 to 353 the chain is on the cytoplasmic side; the sequence is ERAGRRTLH. The helical transmembrane segment at 354 to 374 threads the bilayer; it reads LLGLAGMCGCAILMTVALLLL. Topologically, residues 375–384 are extracellular; sequence ERVPAMSYVS. A helical membrane pass occupies residues 385–405; the sequence is IVAIFGFVAFFEIGPGPIPWF. D-glucose contacts are provided by E396 and W404. At 406 to 417 the chain is on the cytoplasmic side; it reads IVAELFSQGPRP. Residues 418-438 traverse the membrane as a helical segment; that stretch reads AAMAVAGFSNWTCNFIIGMGF. Residues 439–445 lie on the Extracellular side of the membrane; that stretch reads QYVADAM. The chain crosses the membrane as a helical span at residues 446–466; it reads GPYVFLLFAVLLLGFFIFTFL. The Cytoplasmic segment spans residues 467–509; the sequence is KVPETRGRTFDQISAVFHRTPSLLEQEVKPSTELEYLGPDEHD. Phosphothreonine is present on T486. Position 488 is a phosphoserine (S488). The short motif at 489–490 is the Dileucine internalization motif element; sequence LL.

Belongs to the major facilitator superfamily. Sugar transporter (TC 2.A.1.1) family. Glucose transporter subfamily. As to quaternary structure, binds to DAXX. Interacts via its N-terminus with SRFBP1. Interacts with NDUFA9. Interacts with TRARG1; the interaction is required for proper SLC2A4 recycling after insulin stimulation. Sumoylated. In terms of processing, palmitoylated. Palmitoylation by ZDHHC7 controls the insulin-dependent translocation of GLUT4 to the plasma membrane.

Its subcellular location is the cell membrane. The protein resides in the endomembrane system. It localises to the cytoplasm. The protein localises to the perinuclear region. The enzyme catalyses D-glucose(out) = D-glucose(in). Insulin-regulated facilitative glucose transporter, which plays a key role in removal of glucose from circulation. Response to insulin is regulated by its intracellular localization: in the absence of insulin, it is efficiently retained intracellularly within storage compartments in muscle and fat cells. Upon insulin stimulation, translocates from these compartments to the cell surface where it transports glucose from the extracellular milieu into the cell. The chain is Solute carrier family 2, facilitated glucose transporter member 4 from Bos taurus (Bovine).